Consider the following 1627-residue polypeptide: Pleckstrin homology domain-containing family G member 4B (1627 aa).

Disordered regions lie at residues Tyr-211–Arg-349, Leu-381–Val-475, Val-501–Asp-537, Ser-959–Pro-1008, Thr-1049–Leu-1111, and Pro-1124–Ser-1159. Polar residues predominate over residues Gly-241 to Ser-251. Basic and acidic residues-rich tracts occupy residues Gln-262–Glu-273 and Glu-310–Lys-322. Positions Arg-465–Ala-474 are enriched in gly residues. Positions Pro-975 to Arg-985 are enriched in basic and acidic residues. Residues Ser-1057–Ala-1068 show a composition bias toward polar residues. The span at Arg-1070–Lys-1081 shows a compositional bias: basic residues. 2 stretches are compositionally biased toward polar residues: residues Pro-1101–Leu-1111 and Pro-1133–Ser-1144. One can recognise a DH domain in the interval Arg-1161 to Leu-1340. The region spanning Asn-1352 to Trp-1460 is the PH domain. The interval Lys-1519 to Gln-1558 is disordered. The segment covering Thr-1521 to Asp-1535 has biased composition (polar residues). Residues Ser-1545–Gln-1558 are compositionally biased toward low complexity.

Found in a complex with ARHGEF11 and ARHGEF12; binding to ARHGEF11 and ARHGEF12 enhances CDC42 GEF activity of PLEKHG4B, and PLEKHG4B, in turn, inhibits ARHGEF11- and ARHGEF12-mediated RHOA activation. Interacts with ANXA2; this interaction is required for PLEKHG4B localization to cell-cell adhesions.

The protein resides in the basal cell membrane. Its subcellular location is the cell junction. It is found in the nucleus. The protein localises to the cytoplasm. In terms of biological role, guanine nucleotide exchange factor (GEF) which specifically activates small GTPase CDC42 by exchanging bound GDP for free GTP. Plays a role in actin cytoskeletal remodeling in the late stage of cell-cell junction formation by regulating the contractility of actin filaments, which prompts the conversion from 'open' to 'closed' junctions. The sequence is that of Pleckstrin homology domain-containing family G member 4B from Homo sapiens (Human).